A 1433-amino-acid chain; its full sequence is MNEEQRVRQERFKLLMEQLLIPEDVTANHLKDGKIEKLTIKKDERRWHFQLSIPTVLPASIYELLADRLVQTFSHIAKVSFQIQYGQPDLSEQVWQSYWPLIVAKLTNISQPLKEMLEKQTPRFDGKRLVIQVGNETEAIALKRKLTEPLQQAVQSFGFPAVQLDAEVKESKQAFEKFVEQRKQEDHSKVVEAILEKKKLEQQVEKKMKEEKLTIGYPIKDEPVPLETIVEEERRITVQGYIFAAETKELRSGRTLLTFKITDYTDSILVKMFSRDKEDIPLLQAVKKGMWVKVRGGVQNDTFVRDLVMIANDVNEVSGKETKDEAPDDEKRVELHLHTAMSQMDGISSAGAYVTQASKWGHKAIAITDHGVVQAFPEAYGASQKHGIKVIYGVEANLVDDGVPIAYNEAHIPLLDSEFVVFDVETTGLSAVYNKIIELAAVKVKNGEIIDRFERFADPHEPLTNTIIELTGITDDMLKGQPEVEQVLNEFHAFIGDAVLVAHNASFDMGFLNTGFQKMGLGEAKNPVIDTLELGRFLYPTLKNHRLNTLCKKFDIELVSHHRAIYDAEATGHLLWRMVKDATERDILYHDQLNDNMGEGNFHRQRPSHCILLAQTQEGLKNLYKLVSMAHVEYFYRTPRIPRSQLQKHREGILVGSGCDKGEVFEGMMQKTPQEVEEIAKFYDYIEVQPLANYEHLIEKELVKSREALQEIVANIVKLGEQLGKPVVATGNAHYLKEEDYIYRKILIASQGGANPLNKQTLPQVHFRTTSEMLEAFAFLGEEKAKEIVVTNTNHIADQIEEIHPIPDKLYTPKIEGADEEIRQMSYNRARKIYGDPLPEIVEARLEKELKSIIGHGFAVIYLISHKLVKKSLDDGYLVGSRGSVGSSFVATMTEITEVNPLPPHYVCPNCHHSHFFNDGSVGSGYDLPDENCPKCGTPYVKDGQDIPFETFLGFKGDKVPDIDLNFSGEYQPRAHNYTKELFGESYVYRAGTIGTVAEKTAYGYVKGYQSDHDLHFRGAEIDRLVTGCTGVKRTTGQHPGGIIVVPDYMDIHDFCPIQFPADDRGAEWKTTHFDFHSIHDNLLKLDILGHDDPTVIRMLQDLSGIDPKTIPTDDPEVMKIFSGPDVLGVTEEQILCKTGTLGIPEFGTRFVRQMLEETKPSTFSELVQISGLSHGTDVWLNNANELIYNGTCELKDVIGCRDDIMVYLIYKGLEPSLAFKIMEFVRKGKGLQPEWIEEMKKHDVPDWYIGSCLKIKYMFPKAHAAAYVLMAVRIAYFKVHYPILYYASYFTVRADDFDLDTMVKGSAAIRAKIEEINGKGLDASPKEKSLLTVLELALEMVERGFSFQKVDLYRSEATEFLVEGNTLIPPFNALTGVGTNAAINIVKARDEREFLSKEDLQQRSKITKTVLENLDAHGCLEGLPESNQLSLF.

An Exonuclease domain is found at 419 to 575 (FVVFDVETTG…YDAEATGHLL (157 aa)).

It belongs to the DNA polymerase type-C family. PolC subfamily.

Its subcellular location is the cytoplasm. The catalysed reaction is DNA(n) + a 2'-deoxyribonucleoside 5'-triphosphate = DNA(n+1) + diphosphate. In terms of biological role, required for replicative DNA synthesis. This DNA polymerase also exhibits 3' to 5' exonuclease activity. The polypeptide is DNA polymerase III PolC-type (Halalkalibacterium halodurans (strain ATCC BAA-125 / DSM 18197 / FERM 7344 / JCM 9153 / C-125) (Bacillus halodurans)).